Reading from the N-terminus, the 363-residue chain is UDP-N-acetylglucosamine--N-acetylmuramyl-(pentapeptide) pyrophosphoryl-undecaprenol N-acetylglucosamine transferase (363 aa).

UDP-N-acetyl-alpha-D-glucosamine-binding positions include 12 to 14 (TAG), arginine 166, serine 196, and glutamine 291.

This sequence belongs to the glycosyltransferase 28 family. MurG subfamily.

It localises to the cell inner membrane. The enzyme catalyses di-trans,octa-cis-undecaprenyl diphospho-N-acetyl-alpha-D-muramoyl-L-alanyl-D-glutamyl-meso-2,6-diaminopimeloyl-D-alanyl-D-alanine + UDP-N-acetyl-alpha-D-glucosamine = di-trans,octa-cis-undecaprenyl diphospho-[N-acetyl-alpha-D-glucosaminyl-(1-&gt;4)]-N-acetyl-alpha-D-muramoyl-L-alanyl-D-glutamyl-meso-2,6-diaminopimeloyl-D-alanyl-D-alanine + UDP + H(+). Its pathway is cell wall biogenesis; peptidoglycan biosynthesis. In terms of biological role, cell wall formation. Catalyzes the transfer of a GlcNAc subunit on undecaprenyl-pyrophosphoryl-MurNAc-pentapeptide (lipid intermediate I) to form undecaprenyl-pyrophosphoryl-MurNAc-(pentapeptide)GlcNAc (lipid intermediate II). This Legionella pneumophila (strain Paris) protein is UDP-N-acetylglucosamine--N-acetylmuramyl-(pentapeptide) pyrophosphoryl-undecaprenol N-acetylglucosamine transferase.